The sequence spans 120 residues: NAD(P)H-quinone oxidoreductase subunit 3 (120 aa).

Helical transmembrane passes span 2-22 (FVLS…LVPI), 64-84 (MFAL…PWAV), and 89-109 (LGLL…IALV).

The protein belongs to the complex I subunit 3 family. In terms of assembly, NDH-1 can be composed of about 15 different subunits; different subcomplexes with different compositions have been identified which probably have different functions.

It is found in the cellular thylakoid membrane. The catalysed reaction is a plastoquinone + NADH + (n+1) H(+)(in) = a plastoquinol + NAD(+) + n H(+)(out). It catalyses the reaction a plastoquinone + NADPH + (n+1) H(+)(in) = a plastoquinol + NADP(+) + n H(+)(out). Its function is as follows. NDH-1 shuttles electrons from an unknown electron donor, via FMN and iron-sulfur (Fe-S) centers, to quinones in the respiratory and/or the photosynthetic chain. The immediate electron acceptor for the enzyme in this species is believed to be plastoquinone. Couples the redox reaction to proton translocation, and thus conserves the redox energy in a proton gradient. Cyanobacterial NDH-1 also plays a role in inorganic carbon-concentration. The polypeptide is NAD(P)H-quinone oxidoreductase subunit 3 (Picosynechococcus sp. (strain ATCC 27264 / PCC 7002 / PR-6) (Agmenellum quadruplicatum)).